Here is a 235-residue protein sequence, read N- to C-terminus: Ribonuclease 3 (235 aa).

The RNase III domain occupies Pro-8 to Gly-137. Residue Glu-50 participates in Mg(2+) binding. Asp-54 is a catalytic residue. Residues Asp-123 and Glu-126 each coordinate Mg(2+). Residue Glu-126 is part of the active site. The DRBM domain occupies Asp-163–Gly-232. Residues Gln-211–Gly-235 form a disordered region. Basic and acidic residues predominate over residues Ala-226–Gly-235.

Belongs to the ribonuclease III family. Homodimer. It depends on Mg(2+) as a cofactor.

Its subcellular location is the cytoplasm. The catalysed reaction is Endonucleolytic cleavage to 5'-phosphomonoester.. In terms of biological role, digests double-stranded RNA. Involved in the processing of primary rRNA transcript to yield the immediate precursors to the large and small rRNAs (23S and 16S). Processes some mRNAs, and tRNAs when they are encoded in the rRNA operon. Processes pre-crRNA and tracrRNA of type II CRISPR loci if present in the organism. This is Ribonuclease 3 from Heliobacterium modesticaldum (strain ATCC 51547 / Ice1).